The sequence spans 117 residues: Large ribosomal subunit protein bL20 (117 aa).

Belongs to the bacterial ribosomal protein bL20 family.

Its function is as follows. Binds directly to 23S ribosomal RNA and is necessary for the in vitro assembly process of the 50S ribosomal subunit. It is not involved in the protein synthesizing functions of that subunit. This is Large ribosomal subunit protein bL20 from Rickettsia peacockii (strain Rustic).